A 303-amino-acid chain; its full sequence is Cytochrome c oxidase subunit 2 (303 aa).

The first 25 residues, 1–25 (MRHSTTLTGCATGAAGLLAATAAAA), serve as a signal peptide directing secretion. The next 2 helical transmembrane spans lie at 60–80 (FILV…LYAV) and 104–124 (WTIV…PVLF). The Cu cation site is built by His-217, Cys-252, Cys-256, and His-260.

This sequence belongs to the cytochrome c oxidase subunit 2 family. Requires Cu cation as cofactor.

The protein localises to the cell membrane. The catalysed reaction is 4 Fe(II)-[cytochrome c] + O2 + 8 H(+)(in) = 4 Fe(III)-[cytochrome c] + 2 H2O + 4 H(+)(out). Functionally, subunits I and II form the functional core of the enzyme complex. Electrons originating in cytochrome c are transferred via heme a and Cu(A) to the binuclear center formed by heme a3 and Cu(B). This is Cytochrome c oxidase subunit 2 (ctaC) from Cereibacter sphaeroides (Rhodobacter sphaeroides).